Here is a 240-residue protein sequence, read N- to C-terminus: ATP synthase subunit a (240 aa).

5 helical membrane passes run 21-41 (LSNL…CVWG), 78-98 (IFLP…LIGV), 116-136 (DAVM…YYGI), 183-203 (ILLS…FGAA), and 212-232 (FSVF…MVYM).

It belongs to the ATPase A chain family. In terms of assembly, F-type ATPases have 2 components, CF(1) - the catalytic core - and CF(0) - the membrane proton channel. CF(1) has five subunits: alpha(3), beta(3), gamma(1), delta(1), epsilon(1). CF(0) has three main subunits: a(1), b(2) and c(9-12). The alpha and beta chains form an alternating ring which encloses part of the gamma chain. CF(1) is attached to CF(0) by a central stalk formed by the gamma and epsilon chains, while a peripheral stalk is formed by the delta and b chains.

It is found in the cell membrane. Key component of the proton channel; it plays a direct role in the translocation of protons across the membrane. This Oceanobacillus iheyensis (strain DSM 14371 / CIP 107618 / JCM 11309 / KCTC 3954 / HTE831) protein is ATP synthase subunit a.